Reading from the N-terminus, the 632-residue chain is MPHNSYPLLHTINDPADLRLVPRAQLGALADELRAYLLHSVAKTGGHLSSNLGTVELTVALHYVFNTPHDRVVWDVGHQTYPHKILTGRRERMATLRQLGGLSGFPQRGESEYDDFGTAHSSTSISAALGMALAAKIRGEERYAIAVIGDGALTAGMAFEALNNAGVADCNLLVILNDNDMSISPPVGALNRHLAKLMSGQFYAAAKNVGKTVLKGAPPLFELAKRLEESAKGMVVPATLFEKFGFNYIGPIDGHDLDALIPTLENIKHLKGPQFLHVVTKKGQGYKLAEADPVAYHGPGKFDPAVGLQAPATSPKQTFTQVFGQWLCDMAAVDPRLVGITPAMREGSGMVEFEQRFPQRFFDVGIAEQHAVTFAAGLACEGLKPVVAIYSTFLQRGYDQLIHDVAIQNLPVVFALDRAGLVGADGATHAGAYDIPFLRCIPNVSVACPADENECRQLLSTAFAQNHPVAVRYPRGAGAGTVVQAGLEALPFGQGEIRRAGSSVAILAFGTLLHPALQVAEKLNVTVVNMRWVKPLDVALLLQVAADHDALVTVEEGAIMGGAGSAVLEALQAAGVLKPVLQLGLRDEFIEHGDPAKLLALQGLDAAGIQASITKRFAALLVPGRLALKAVA.

Thiamine diphosphate is bound by residues His-78 and 119–121 (AHS). Residue Asp-150 participates in Mg(2+) binding. Residues 151–152 (GA), Asn-179, Tyr-286, and Glu-368 contribute to the thiamine diphosphate site. Asn-179 is a Mg(2+) binding site.

This sequence belongs to the transketolase family. DXPS subfamily. Homodimer. Requires Mg(2+) as cofactor. Thiamine diphosphate serves as cofactor.

It carries out the reaction D-glyceraldehyde 3-phosphate + pyruvate + H(+) = 1-deoxy-D-xylulose 5-phosphate + CO2. It functions in the pathway metabolic intermediate biosynthesis; 1-deoxy-D-xylulose 5-phosphate biosynthesis; 1-deoxy-D-xylulose 5-phosphate from D-glyceraldehyde 3-phosphate and pyruvate: step 1/1. Functionally, catalyzes the acyloin condensation reaction between C atoms 2 and 3 of pyruvate and glyceraldehyde 3-phosphate to yield 1-deoxy-D-xylulose-5-phosphate (DXP). The sequence is that of 1-deoxy-D-xylulose-5-phosphate synthase from Albidiferax ferrireducens (strain ATCC BAA-621 / DSM 15236 / T118) (Rhodoferax ferrireducens).